We begin with the raw amino-acid sequence, 257 residues long: MPRYALKIEYDGAPFAGWQRQAVLPSVQGAIEAALGRLEPGPHTIAAAGRTDTGVHATGQVAHCDLGKDWDPFRLAGALNAHLKPLPVAVVAAARVGEDFHARFSAIERRYLFRLLARRAPEVHDRGRVWRVPHPLDGAAMREAAAHLVGRHDFTTFRAIGCQAASPVKTLDELTLETVEVPNGVEYRFRLRARSFLHNQVRSIVGTLERVGAGAWAPDRVKEALEARDRAACGPVCPPQGLYLTGVGYPADPFAAT.

The active-site Nucleophile is Asp52. Tyr111 contributes to the substrate binding site.

It belongs to the tRNA pseudouridine synthase TruA family. As to quaternary structure, homodimer.

The catalysed reaction is uridine(38/39/40) in tRNA = pseudouridine(38/39/40) in tRNA. Functionally, formation of pseudouridine at positions 38, 39 and 40 in the anticodon stem and loop of transfer RNAs. The polypeptide is tRNA pseudouridine synthase A (Cereibacter sphaeroides (strain ATCC 17025 / ATH 2.4.3) (Rhodobacter sphaeroides)).